We begin with the raw amino-acid sequence, 93 residues long: Transcription factor RADIALIS (93 aa).

The region spanning 6-61 is the SANT domain; it reads GSGRPWSAKENKAFERALAVYDKDTPDRWANVARAVEGRTPEEVKKHYEILVEDIK.

As to expression, specifically expressed in the dorsal region of developing flowers.

The protein resides in the nucleus. Involved in the dorsovental asymmetry of flowers. Promotes dorsal identity. This Antirrhinum majus (Garden snapdragon) protein is Transcription factor RADIALIS (RAD).